A 187-amino-acid polypeptide reads, in one-letter code: Cell division protein SepF (187 aa).

The disordered stretch occupies residues 21 to 97 (EVEVPDKQQQ…ATPNNASQES (77 aa)). Composition is skewed to polar residues over residues 38 to 63 (EQSQ…YTTT) and 70 to 97 (RMSN…SQES).

It belongs to the SepF family. As to quaternary structure, homodimer. Interacts with FtsZ.

The protein resides in the cytoplasm. Cell division protein that is part of the divisome complex and is recruited early to the Z-ring. Probably stimulates Z-ring formation, perhaps through the cross-linking of FtsZ protofilaments. Its function overlaps with FtsA. In Staphylococcus aureus (strain Mu3 / ATCC 700698), this protein is Cell division protein SepF.